The sequence spans 294 residues: Protease HtpX (294 aa).

The next 2 helical transmembrane spans lie at 4 to 24 (IALF…VLSL) and 34 to 52 (GLLI…VSLM). Residue histidine 139 participates in Zn(2+) binding. Residue glutamate 140 is part of the active site. Histidine 143 serves as a coordination point for Zn(2+). 2 consecutive transmembrane segments (helical) span residues 158-178 (VVNT…AGFL) and 194-214 (LIYF…ASII). Glutamate 223 is a binding site for Zn(2+).

The protein belongs to the peptidase M48B family. The cofactor is Zn(2+).

Its subcellular location is the cell inner membrane. The protein is Protease HtpX of Klebsiella pneumoniae subsp. pneumoniae (strain ATCC 700721 / MGH 78578).